Reading from the N-terminus, the 267-residue chain is Small ribosomal subunit protein eS4 (267 aa).

An S4 RNA-binding domain is found at 42-104 (LPLILVLRNR…TKENFRLLFD (63 aa)).

This sequence belongs to the eukaryotic ribosomal protein eS4 family.

It localises to the cytoplasm. The chain is Small ribosomal subunit protein eS4 (rps4) from Dictyostelium discoideum (Social amoeba).